Reading from the N-terminus, the 183-residue chain is Threonylcarbamoyl-AMP synthase (183 aa).

The YrdC-like domain maps to 1-183; it reads MNITQIIEKL…LFTNQLVRQG (183 aa).

Belongs to the SUA5 family. TsaC subfamily.

The protein localises to the cytoplasm. The enzyme catalyses L-threonine + hydrogencarbonate + ATP = L-threonylcarbamoyladenylate + diphosphate + H2O. Its function is as follows. Required for the formation of a threonylcarbamoyl group on adenosine at position 37 (t(6)A37) in tRNAs that read codons beginning with adenine. Catalyzes the conversion of L-threonine, HCO(3)(-)/CO(2) and ATP to give threonylcarbamoyl-AMP (TC-AMP) as the acyladenylate intermediate, with the release of diphosphate. The protein is Threonylcarbamoyl-AMP synthase of Histophilus somni (strain 129Pt) (Haemophilus somnus).